A 96-amino-acid chain; its full sequence is Large ribosomal subunit protein uL23 (96 aa).

It belongs to the universal ribosomal protein uL23 family. In terms of assembly, part of the 50S ribosomal subunit. Contacts protein L29, and trigger factor when it is bound to the ribosome.

Functionally, one of the early assembly proteins it binds 23S rRNA. One of the proteins that surrounds the polypeptide exit tunnel on the outside of the ribosome. Forms the main docking site for trigger factor binding to the ribosome. The protein is Large ribosomal subunit protein uL23 of Syntrophus aciditrophicus (strain SB).